Reading from the N-terminus, the 862-residue chain is Ecdysone-induced protein 78C (862 aa).

4 disordered regions span residues 28 to 83, 97 to 138, 173 to 210, and 230 to 353; these read SSEQ…EEAL, LHFF…KQHH, ASLSPQQQQQRQHTHQQQQQQQQQQQHPGQQQHQLNCT, and ASNH…NNNN. Residues 37–46 show a composition bias toward basic and acidic residues; that stretch reads KQEDLIKDFT. A compositionally biased stretch (acidic residues) spans 47–82; the sequence is RDEEEQPSEEEAEEEDNEEDEEEEGEEEEEDEDEEA. The segment covering 105–119 has biased composition (polar residues); that stretch reads DSSTQGAYSEANSLE. Composition is skewed to low complexity over residues 173–206, 230–291, 308–335, and 342–353; these read ASLSPQQQQQRQHTHQQQQQQQQQQQHPGQQQHQ, ASNH…NNSV, QQQQPLPTTQLQQQQQHQQQLQHPQQQQ, and SSSSNGSSNNNN. The segment at residues 360–435 is a DNA-binding region (nuclear receptor); sequence FVPCKVCGDK…AGMSRDSVRY (76 aa). 2 NR C4-type zinc fingers span residues 363-383 and 399-418; these read CKVCGDKASGYHYGVTSCEGC and CLRDGKCLVIRLNRNRCQYC. The segment at 444–557 is disordered; sequence ELNGAAASSA…NNNSSSGNAS (114 aa). Residues 447-460 show a composition bias toward low complexity; that stretch reads GAAASSAAAGAPAS. A compositionally biased stretch (polar residues) spans 463-472; it reads VDDSTSSTLH. The span at 475 to 508 shows a compositional bias: low complexity; sequence HLQQQQQQHLLQQQQQQQHQPQLQQHHQLQQQPH. The segment covering 516–533 has biased composition (polar residues); that stretch reads TPSTPQTPQMCSIASSPS. The segment covering 539–555 has biased composition (low complexity); it reads NSANNNNNNNNNSSSGN. An NR LBD domain is found at 626–855; the sequence is YTEELTRELM…PPLFAEIFDI (230 aa).

Belongs to the nuclear hormone receptor family. NR1 subfamily.

It is found in the nucleus. In terms of biological role, induces the early late puff 78C which triggers puparium formation and development. The sequence is that of Ecdysone-induced protein 78C (Eip78C) from Drosophila melanogaster (Fruit fly).